The chain runs to 216 residues: Ras-related protein Rab-11A (216 aa).

The residue at position 2 (G2) is an N-acetylglycine. S20, G21, V22, G23, K24, S25, N26, N37, L38, S40, S42, and T43 together coordinate GTP. S25 contributes to the Mg(2+) binding site. Residues 36 to 47 (FNLESKSTIGVE) carry the Switch 1 motif. Positions 43 and 66 each coordinate Mg(2+). The short motif at 67 to 86 (TAGQERYRAITSAYYRGAVG) is the Switch 2 element. Residues G69, N124, K125, D127, A155, and L156 each coordinate GTP. The segment at 183–208 (DRRENDMSPSNNVVPIHVPPTTENKP) is disordered. Residues C212 and C213 are each lipidated (S-geranylgeranyl cysteine). The residue at position 213 (C213) is a Cysteine methyl ester. A propeptide spans 214-216 (QNI) (removed in mature form).

The protein belongs to the small GTPase superfamily. Rab family. Requires Mg(2+) as cofactor.

Its subcellular location is the cell membrane. The protein localises to the endosome membrane. The protein resides in the recycling endosome membrane. It localises to the cleavage furrow. It is found in the cytoplasmic vesicle. Its subcellular location is the phagosome. The protein localises to the cytoplasmic vesicle membrane. The protein resides in the golgi apparatus. It localises to the trans-Golgi network. It carries out the reaction GTP + H2O = GDP + phosphate + H(+). Its activity is regulated as follows. Regulated by guanine nucleotide exchange factors (GEFs) which promote the exchange of bound GDP for free GTP. Regulated by GTPase activating proteins (GAPs) which increase the GTP hydrolysis activity. Inhibited by GDP dissociation inhibitors (GDIs) which prevent Rab-GDP dissociation. Functionally, the small GTPases Rab are key regulators of intracellular membrane trafficking, from the formation of transport vesicles to their fusion with membranes. Rabs cycle between an inactive GDP-bound form and an active GTP-bound form that is able to recruit to membranes different set of downstream effectors directly responsible for vesicle formation, movement, tethering and fusion. The small Rab GTPase RAB11A regulates endocytic recycling. May also be involved in the regulation of preciliary trafficking and neosynthesized protein export. This Gallus gallus (Chicken) protein is Ras-related protein Rab-11A (RAB11A).